The primary structure comprises 319 residues: Annexin A5 (319 aa).

Residue A2 is modified to N-acetylalanine. Annexin repeat units lie at residues 13–84, 85–156, 168–240, and 244–315; these read FDGR…AMMK, PSRL…VLLQ, AQVE…AVVK, and SIPA…LLCG. K27 participates in a covalent cross-link: Glycyl lysine isopeptide (Lys-Gly) (interchain with G-Cter in SUMO1); alternate. K27 is covalently cross-linked (Glycyl lysine isopeptide (Lys-Gly) (interchain with G-Cter in SUMO2); alternate). Phosphoserine is present on S35. N6-acetyllysine is present on residues K68, K74, K77, K95, and K99. N6-succinyllysine is present on K288. The short motif at 312–318 is the [IL]-x-C-x-x-[DE] motif element; the sequence is LLCGGED.

It belongs to the annexin family. Monomer. Binds ATRX and EIF5B. S-nitrosylation is induced by interferon-gamma and oxidatively-modified low-densitity lipoprotein (LDL(ox)) possibly implicating the iNOS-S100A8/9 transnitrosylase complex.

In terms of biological role, this protein is an anticoagulant protein that acts as an indirect inhibitor of the thromboplastin-specific complex, which is involved in the blood coagulation cascade. The protein is Annexin A5 (Anxa5) of Mus musculus (Mouse).